We begin with the raw amino-acid sequence, 285 residues long: Bifunctional protein FolD (285 aa).

NADP(+) is bound by residues 165-167 (GRS) and S190.

This sequence belongs to the tetrahydrofolate dehydrogenase/cyclohydrolase family. As to quaternary structure, homodimer.

The catalysed reaction is (6R)-5,10-methylene-5,6,7,8-tetrahydrofolate + NADP(+) = (6R)-5,10-methenyltetrahydrofolate + NADPH. It catalyses the reaction (6R)-5,10-methenyltetrahydrofolate + H2O = (6R)-10-formyltetrahydrofolate + H(+). It functions in the pathway one-carbon metabolism; tetrahydrofolate interconversion. Catalyzes the oxidation of 5,10-methylenetetrahydrofolate to 5,10-methenyltetrahydrofolate and then the hydrolysis of 5,10-methenyltetrahydrofolate to 10-formyltetrahydrofolate. This Burkholderia orbicola (strain AU 1054) protein is Bifunctional protein FolD.